Here is a 202-residue protein sequence, read N- to C-terminus: MESQCRPNVDGVHNGVESHVKVVEKPRSVGSSSEFVLRILGLLLTLIAAVVAGVDKQTKIIPLTLIKTLPSLHVPVTAKWSDMSAFVYLVVSNAIACSYAAISLVLVTMLGRRGKGGRVLAVIVLDLHMVGLLFSANGAATAVGVLGQYGNSHVEWKKVCNVFDSFCHHLVASLALSFLGSLSFLGLVLLAILNLHKKSSTK.

Topologically, residues 1–33 are cytoplasmic; it reads MESQCRPNVDGVHNGVESHVKVVEKPRSVGSSS. The chain crosses the membrane as a helical span at residues 34–54; sequence EFVLRILGLLLTLIAAVVAGV. The Extracellular portion of the chain corresponds to 55–85; the sequence is DKQTKIIPLTLIKTLPSLHVPVTAKWSDMSA. Residues 86–106 form a helical membrane-spanning segment; sequence FVYLVVSNAIACSYAAISLVL. Residues 107 to 118 lie on the Cytoplasmic side of the membrane; that stretch reads VTMLGRRGKGGR. The chain crosses the membrane as a helical span at residues 119–139; sequence VLAVIVLDLHMVGLLFSANGA. Over 140–172 the chain is Extracellular; the sequence is ATAVGVLGQYGNSHVEWKKVCNVFDSFCHHLVA. Residues 173–193 traverse the membrane as a helical segment; sequence SLALSFLGSLSFLGLVLLAIL. Over 194–202 the chain is Cytoplasmic; sequence NLHKKSSTK.

It belongs to the Casparian strip membrane proteins (CASP) family. Homodimer and heterodimers.

It localises to the cell membrane. The chain is CASP-like protein 1E1 from Vitis vinifera (Grape).